The following is a 272-amino-acid chain: Ribonuclease HII (272 aa).

Residues 87–272 (KYVAGVDEVG…HRMSFLKNIL (186 aa)) enclose the RNase H type-2 domain. Residues Asp93, Glu94, and Asp188 each coordinate a divalent metal cation.

It belongs to the RNase HII family. The cofactor is Mn(2+). Requires Mg(2+) as cofactor.

It is found in the cytoplasm. It catalyses the reaction Endonucleolytic cleavage to 5'-phosphomonoester.. Endonuclease that specifically degrades the RNA of RNA-DNA hybrids. In Clostridium perfringens (strain SM101 / Type A), this protein is Ribonuclease HII.